Reading from the N-terminus, the 91-residue chain is Conotoxin Im9.1 (91 aa).

An N-terminal signal peptide occupies residues 1–23 (MSKVGVVPLIFLVLLSIAALQNG). A propeptide spanning residues 24 to 55 (DDPRRQRDEKQSPQGDILRSTLTKYSYNIQRR) is cleaved from the precursor. 3 cysteine pairs are disulfide-bonded: cysteine 56–cysteine 72, cysteine 63–cysteine 83, and cysteine 66–cysteine 86.

This sequence belongs to the conotoxin M superfamily. Expressed by the venom duct.

It localises to the secreted. Probable neurotoxin. This Conus imperialis (Imperial cone) protein is Conotoxin Im9.1.